An 810-amino-acid chain; its full sequence is Ecotropic viral integration site 5 protein homolog (810 aa).

The interaction with alpha-tubulin, gamma-tubulin, BIRC5 and FBXO5 stretch occupies residues methionine 1–glutamate 483. Disordered stretches follow at residues valine 49–proline 80 and threonine 98–alanine 123. Over residues serine 51–proline 80 the composition is skewed to low complexity. Phosphoserine occurs at positions 102 and 113. Residues leucine 103–alanine 123 show a composition bias toward low complexity. The tract at residues serine 128–isoleucine 693 is dimerization. Residues glycine 163 to glycine 348 form the Rab-GAP TBC domain. The tract at residues glutamine 377 to valine 810 is targeting to the centrosomes. The stretch at lysine 406–phenylalanine 716 forms a coiled coil. The tract at residues lysine 487–valine 810 is interaction with AURKB and INCENP. Phosphoserine occurs at positions 497, 689, 776, and 778. The disordered stretch occupies residues glycine 756–valine 810. Positions leucine 785 to valine 810 are enriched in basic and acidic residues.

As to quaternary structure, dimeric and monomeric. Interacts with alpha- and gamma-tubulin. Interacts with FBXO5. Interacts with the chromosome passenger complex (CPC) which is at least composed of AURKB/aurora-B, BIRC5/survivin, CDCA8/borealin and INCENP. Post-translationally, probably phosphorylated by PLK1; may be required for degradation during mitosis. In terms of processing, ubiquitinated. Degradation during prophase is ubiquitin-dependent. In terms of tissue distribution, expressed in various cell lines (at protein level). Expressed in a wide range of tissues including brain and adrenal.

Its subcellular location is the nucleus. The protein resides in the cytoplasm. The protein localises to the cytoskeleton. It is found in the microtubule organizing center. It localises to the centrosome. Its subcellular location is the spindle. Functions as a regulator of cell cycle progression by stabilizing the FBXO5 protein and promoting cyclin-A accumulation during interphase. May play a role in cytokinesis. This Homo sapiens (Human) protein is Ecotropic viral integration site 5 protein homolog (EVI5).